The chain runs to 128 residues: Sulfurtransferase TusD (128 aa).

Residue Cys-78 is the Cysteine persulfide intermediate of the active site.

Belongs to the DsrE/TusD family. As to quaternary structure, heterohexamer, formed by a dimer of trimers. The hexameric TusBCD complex contains 2 copies each of TusB, TusC and TusD. The TusBCD complex interacts with TusE.

The protein localises to the cytoplasm. Functionally, part of a sulfur-relay system required for 2-thiolation of 5-methylaminomethyl-2-thiouridine (mnm(5)s(2)U) at tRNA wobble positions. Accepts sulfur from TusA and transfers it in turn to TusE. This is Sulfurtransferase TusD from Escherichia coli O17:K52:H18 (strain UMN026 / ExPEC).